The chain runs to 1594 residues: Transcription factor Gibbin (1594 aa).

Disordered stretches follow at residues 19-111, 149-241, 256-307, and 367-464; these read PDYL…RHWD, LRLS…LADA, QLLE…DPLG, and CSPH…RKGK. Residues 30–47 are compositionally biased toward pro residues; that stretch reads GGPPTPRPLLPTRPPASP. K79 is subject to N6-acetyllysine. Positions 165–177 are enriched in polar residues; the sequence is SFFSSPSLANSIR. Residues 178–193 are compositionally biased toward basic and acidic residues; the sequence is SPEERANPHTKSERPS. Over residues 228-240 the composition is skewed to acidic residues; the sequence is PEPDGPDYSELAD. Residue S267 is modified to Phosphoserine. Residues 272–303 show a composition bias toward low complexity; that stretch reads PQLLDPQPRFLDPQALEPLGEGLELPPLQPLA. A compositionally biased stretch (basic residues) spans 391–401; that stretch reads ILCRRRKAGRG. The segment at residues 395–407 is a DNA-binding region (a.T hook 1); the sequence is RRKAGRGRKADSG. Residues 427-447 are compositionally biased toward pro residues; that stretch reads EPPPLPPPPPPTLSGPGPVPE. The a.T hook 2 DNA-binding region spans 541–553; the sequence is KRKRGRPPKNLLL. Positions 578–604 are disordered; sequence MPEVKKRRRRKQKLASPQPSYAADAND. At S593 the chain carries Phosphoserine. A Glycyl lysine isopeptide (Lys-Gly) (interchain with G-Cter in SUMO2) cross-link involves residue K606. The disordered stretch occupies residues 714 to 789; that stretch reads LTELGHPRKR…PGGQAGRNCG (76 aa). Residues 734–743 show a composition bias toward basic residues; that stretch reads KPKRKRRSRK. Phosphoserine occurs at positions 825 and 842. Position 887 is an omega-N-methylarginine (R887). The residue at position 892 (S892) is a Phosphoserine. Residues 942–967 form a disordered region; that stretch reads KLAPPPSAVARSPTTHPPANTYPPQY. Phosphoserine is present on S1060. Disordered stretches follow at residues 1152–1191 and 1245–1306; these read VSET…QSSL and STSA…PDLG. 3 stretches are compositionally biased toward low complexity: residues 1153–1168, 1180–1191, and 1245–1264; these read SETF…QFSQ, SEASSSEGQSSL, and STSA…PRQP. S1180 is subject to Phosphoserine. Residues S1315, S1317, and S1392 each carry the phosphoserine modification. The residue at position 1394 (T1394) is a Phosphothreonine. The residue at position 1396 (S1396) is a Phosphoserine. Residue K1402 forms a Glycyl lysine isopeptide (Lys-Gly) (interchain with G-Cter in SUMO2) linkage. The interval 1495 to 1525 is disordered; that stretch reads HLASPPATPKADKEPLEMARPPGPPRGPAAA. Phosphoserine is present on residues S1498 and S1540.

Its subcellular location is the nucleus. The protein localises to the chromosome. Functionally, transcription factor required for the proper patterning of the epidermis, which plays a key role in early epithelial morphogenesis. Directly binds promoter and enhancer regions and acts by maintaining local enhancer-promoter chromatin architecture. Interacts with many sequence-specific zinc-finger transcription factors and methyl-CpG-binding proteins to regulate the expression of mesoderm genes that wire surface ectoderm stratification. In Mus musculus (Mouse), this protein is Transcription factor Gibbin.